A 110-amino-acid chain; its full sequence is Large ribosomal subunit protein uL22 (110 aa).

It belongs to the universal ribosomal protein uL22 family. In terms of assembly, part of the 50S ribosomal subunit.

Its function is as follows. This protein binds specifically to 23S rRNA; its binding is stimulated by other ribosomal proteins, e.g. L4, L17, and L20. It is important during the early stages of 50S assembly. It makes multiple contacts with different domains of the 23S rRNA in the assembled 50S subunit and ribosome. In terms of biological role, the globular domain of the protein is located near the polypeptide exit tunnel on the outside of the subunit, while an extended beta-hairpin is found that lines the wall of the exit tunnel in the center of the 70S ribosome. The sequence is that of Large ribosomal subunit protein uL22 from Stutzerimonas stutzeri (strain A1501) (Pseudomonas stutzeri).